The sequence spans 663 residues: MIDKRDDKPFKLKSKYKPSGDQPQAIESLVDNIEGGEKAQILLGATGTGKTYTMSQVISKVNKPTLVIAHNKTLAGQLYGEFKEFFPDNAVEYFVSYYDYYQPEAYVPSSDTYIEKDSSVNDEIDKLRHSATASLLERNDVIVVASVSCIYGLGSPKEYADSAVSLRPGQEISRDTLLNQLVDIQFERNDIDFQRGCFRVRGDVVEVFPASRDEHAFRVEFFGDEIDRICEIESLTGKTIGEVDHLVLFPATHFVTNDEHMEQSIAKIQAELAEQLQLFESEGKLLEAQRLRQRTEYDIEMLREMGYTSGVENYSRHMDGRSPGEPPYTLLDFFPEDFLIMIDESHMTMGQIKGMYNGDQARKQMLVDYGFRLPSALDNRPLRREEFESHVHQIVYVSATPGEYEMSQTNTIIEQIIRPTGLLDPEIDVRPSMGQMDDLLGEINQRVARDERTFITTLTKKMAEDLTDYLKEMGVKVKYMHSDIKTLERTEIIRDLRLGVFDVLIGINLLREGIDVPEVSLVAILDADKEGFLRNERGLIQTIGRAARNVDGHVIMYADKMTDSMQRAIDETARRREIQIAYNKAHGIVPQTIKKDIRGLISISKTSHNDISKEEMDYESMSRGERKEAINALQKQMQEAAELLDFELAAQMRDLILELKLMD.

The segment covering Met1–Phe10 has biased composition (basic and acidic residues). Positions Met1 to Pro23 are disordered. The region spanning Asp31–Glu271 is the Helicase ATP-binding domain. Gly44 to Thr51 contributes to the ATP binding site. The Beta-hairpin signature appears at Tyr97–Val120. One can recognise a Helicase C-terminal domain in the interval Gln435–Ile601. The UVR domain maps to Lys627–Met662.

This sequence belongs to the UvrB family. Forms a heterotetramer with UvrA during the search for lesions. Interacts with UvrC in an incision complex.

It is found in the cytoplasm. The UvrABC repair system catalyzes the recognition and processing of DNA lesions. A damage recognition complex composed of 2 UvrA and 2 UvrB subunits scans DNA for abnormalities. Upon binding of the UvrA(2)B(2) complex to a putative damaged site, the DNA wraps around one UvrB monomer. DNA wrap is dependent on ATP binding by UvrB and probably causes local melting of the DNA helix, facilitating insertion of UvrB beta-hairpin between the DNA strands. Then UvrB probes one DNA strand for the presence of a lesion. If a lesion is found the UvrA subunits dissociate and the UvrB-DNA preincision complex is formed. This complex is subsequently bound by UvrC and the second UvrB is released. If no lesion is found, the DNA wraps around the other UvrB subunit that will check the other stand for damage. This Streptococcus pyogenes serotype M2 (strain MGAS10270) protein is UvrABC system protein B.